The sequence spans 181 residues: Mating-type M-specific polypeptide Mc (181 aa).

The HMG box DNA-binding region spans threonine 103–lysine 171.

It is found in the nucleus. In terms of biological role, mating type proteins are sequence specific DNA-binding proteins that act as master switches in yeast differentiation by controlling gene expression in a cell type-specific fashion. Positive regulator of MFM genes. The HMG box recognizes the DNA sequence 5'-AACAAAG-3'. Required for conjugation and efficient meiosis. This chain is Mating-type M-specific polypeptide Mc (matMc), found in Schizosaccharomyces kambucha (Fission yeast).